Consider the following 121-residue polypeptide: Large ribosomal subunit protein bL17 (121 aa).

The protein belongs to the bacterial ribosomal protein bL17 family. As to quaternary structure, part of the 50S ribosomal subunit. Contacts protein L32.

This chain is Large ribosomal subunit protein bL17, found in Mycoplasmopsis agalactiae (strain NCTC 10123 / CIP 59.7 / PG2) (Mycoplasma agalactiae).